The sequence spans 545 residues: Esterase-5B (545 aa).

The signal sequence occupies residues 1–19; it reads MYCAKLILLLGCFWISSSA. A disulfide bond links Cys84 and Cys103. The N-linked (GlcNAc...) asparagine glycan is linked to Asn113. Ser207 functions as the Acyl-ester intermediate in the catalytic mechanism. Cys259 and Cys271 are disulfide-bonded. Asn421 carries N-linked (GlcNAc...) asparagine glycosylation. Residue His467 is the Charge relay system of the active site. The N-linked (GlcNAc...) asparagine glycan is linked to Asn507. A disulfide bond links Cys515 and Cys536.

This sequence belongs to the type-B carboxylesterase/lipase family. Homodimer.

It is found in the secreted. The catalysed reaction is a carboxylic ester + H2O = an alcohol + a carboxylate + H(+). This chain is Esterase-5B (Est-5B), found in Drosophila persimilis (Fruit fly).